A 227-amino-acid polypeptide reads, in one-letter code: Thymidylate synthase (227 aa).

89 to 90 provides a ligand contact to dUMP; sequence RR. Catalysis depends on Cys109, which acts as the Nucleophile. Residues 129 to 132, Asn140, and 170 to 172 contribute to the dUMP site; these read RSND and HVY. Asp132 contacts (6R)-5,10-methylene-5,6,7,8-tetrahydrofolate.

This sequence belongs to the thymidylate synthase family. Bacterial-type ThyA subfamily. As to quaternary structure, homodimer.

The protein resides in the cytoplasm. It carries out the reaction dUMP + (6R)-5,10-methylene-5,6,7,8-tetrahydrofolate = 7,8-dihydrofolate + dTMP. Its pathway is pyrimidine metabolism; dTTP biosynthesis. Functionally, catalyzes the reductive methylation of 2'-deoxyuridine-5'-monophosphate (dUMP) to 2'-deoxythymidine-5'-monophosphate (dTMP) while utilizing 5,10-methylenetetrahydrofolate (mTHF) as the methyl donor and reductant in the reaction, yielding dihydrofolate (DHF) as a by-product. This enzymatic reaction provides an intracellular de novo source of dTMP, an essential precursor for DNA biosynthesis. This is Thymidylate synthase from Bacillus atrophaeus.